Reading from the N-terminus, the 237-residue chain is Probable GTP-binding protein EngB (237 aa).

Residues 13 to 188 enclose the EngB-type G domain; sequence TGYEIAFAGR…ASVMAGRLNY (176 aa). Residues 21-28, 48-52, 67-70, 134-137, and 167-169 each bind GTP; these read GRSNAGKS, GRTQM, DLPG, TKAD, and FSS. Mg(2+)-binding residues include serine 28 and threonine 50. Residues 207 to 220 are compositionally biased toward acidic residues; sequence DDLNDELMDQDETS. The tract at residues 207-237 is disordered; sequence DDLNDELMDQDETSEFNTENIDDHLDQEPKI. Residues 227–237 are compositionally biased toward basic and acidic residues; the sequence is IDDHLDQEPKI.

It belongs to the TRAFAC class TrmE-Era-EngA-EngB-Septin-like GTPase superfamily. EngB GTPase family. The cofactor is Mg(2+).

Necessary for normal cell division and for the maintenance of normal septation. This chain is Probable GTP-binding protein EngB, found in Acinetobacter baylyi (strain ATCC 33305 / BD413 / ADP1).